Here is a 1624-residue protein sequence, read N- to C-terminus: ATP-binding cassette sub-family A member 9 (1624 aa).

A helical membrane pass occupies residues 31 to 51 (LLEWLFSFLLVLFLYLFFSNL). Asparagine 120 and asparagine 195 each carry an N-linked (GlcNAc...) asparagine glycan. A run of 6 helical transmembrane segments spans residues 221-243 (VATDFFIFFCIISFSTFIYYVSV), 269-289 (SWGLMYAGFILIMATLMALIV), 300-320 (FVMVFTLFLLYGLSLITLAFL), 329-349 (FLTGLVVFLLIVFWGILGFPA), 354-374 (LPAFLEWTLCLLSPFAFTVGM), and 398-418 (LIIATLFMLVFDTLLYLVLTL). Positions 481-716 (IRIKNLKKEY…WGIGYHLSLH (236 aa)) constitute an ABC transporter 1 domain. 517–524 (GHSGAGKT) provides a ligand contact to ATP. Residues 864-884 (LWTILLLFGISFIPQLLEHLF) traverse the membrane as a helical segment. Asparagine 949 carries N-linked (GlcNAc...) asparagine glycosylation. 6 consecutive transmembrane segments (helical) span residues 1026-1046 (TFFWIPMAASFTPYIAMSSIG), 1065-1085 (AYWFGQALVDVSLYFLILLLM), 1108-1128 (ILCSIGYVSSLVFLTYVISFI), 1136-1156 (SGIWSFFFLIVVIFSIVATDL), 1163-1183 (GLFFGTMLIPPFTLIGSLFIF), and 1200-1220 (EIVYLALLIPYLHFLIFLFIL). The region spanning 1288 to 1521 (LRKEYAGKKK…FGKDYLLEMK (234 aa)) is the ABC transporter 2 domain. 1326 to 1333 (GHNGAGKS) contacts ATP.

This sequence belongs to the ABC transporter superfamily. ABCA family. As to expression, widely expressed with higher expression in heart.

It localises to the membrane. Transporter that may play a role in monocyte differentiation and lipid transport and homeostasis. The protein is ATP-binding cassette sub-family A member 9 (ABCA9) of Homo sapiens (Human).